Here is a 172-residue protein sequence, read N- to C-terminus: B-box zinc finger protein 18 (172 aa).

Zn(2+) is bound by residues Cys5, Cys8, Cys28, His33, Cys56, Cys59, Cys79, and His84. The segment at 5-47 (CDACESAAAIVFCAADEAALCCSCDEKVHKCNKLASRHLRVGL) adopts a B box-type 1; atypical zinc-finger fold. A B box-type 2; atypical zinc finger spans residues 56 to 96 (CDICENAPAFFYCEIDGSSLCLQCDMVVHVGGKRTHRRFLL). The segment at 119–172 (QKASSGRGQESNGNGDHDHNMIDLNSNPQRVHEPGSHNQEEGIDVNNANNHEHE) is disordered. Over residues 120–132 (KASSGRGQESNGN) the composition is skewed to polar residues. Positions 148 to 158 (RVHEPGSHNQE) are enriched in basic and acidic residues.

As to expression, expressed in vasculature of leaves and petioles.

The protein resides in the nucleus. In terms of biological role, acts as a negative regulator of seedling photomorphogenesis. Acts as a negative regulator of blue light-mediated inhibition of hypocotyl elongation through increase of bioactive gibberellin levels. Acts as a repressor of thermotolerance by modulating expression of a set of heat shock-responsive genes. In Arabidopsis thaliana (Mouse-ear cress), this protein is B-box zinc finger protein 18.